A 258-amino-acid polypeptide reads, in one-letter code: Redox-sensing transcriptional repressor Rex (258 aa).

The segment at residues 26–65 is a DNA-binding region (H-T-H motif); the sequence is LYLRALTALSERSVPTVSSEELAAAAGVNSAKLRKDFSYL. Residue 100-105 coordinates NAD(+); the sequence is GIGNLG. Positions 219 to 258 are disordered; that stretch reads AGEEAAADGAAPPVAARKQQRSTGSADQGPDGDVPAVMPA. The span at 225-234 shows a compositional bias: low complexity; the sequence is ADGAAPPVAA.

The protein belongs to the transcriptional regulatory Rex family. As to quaternary structure, homodimer.

It localises to the cytoplasm. Its function is as follows. Modulates transcription of respiratory genes in response to changes in cellular NADH/NAD(+) redox state. Binds to the DNA sequence motif 5'-TGTGAACGCGTTCACA-3' in the promoter of the cydABCD operon. May play a general role as a sensor of cellular redox balance. This Streptomyces coelicolor (strain ATCC BAA-471 / A3(2) / M145) protein is Redox-sensing transcriptional repressor Rex.